A 216-amino-acid polypeptide reads, in one-letter code: 3-isopropylmalate dehydratase small subunit (216 aa).

This sequence belongs to the LeuD family. LeuD type 1 subfamily. As to quaternary structure, heterodimer of LeuC and LeuD.

It catalyses the reaction (2R,3S)-3-isopropylmalate = (2S)-2-isopropylmalate. It functions in the pathway amino-acid biosynthesis; L-leucine biosynthesis; L-leucine from 3-methyl-2-oxobutanoate: step 2/4. Its function is as follows. Catalyzes the isomerization between 2-isopropylmalate and 3-isopropylmalate, via the formation of 2-isopropylmaleate. This chain is 3-isopropylmalate dehydratase small subunit, found in Methylibium petroleiphilum (strain ATCC BAA-1232 / LMG 22953 / PM1).